We begin with the raw amino-acid sequence, 63 residues long: Large ribosomal subunit protein bL35 (63 aa).

2 stretches are compositionally biased toward basic residues: residues 1-25 (MPKM…KHRQ) and 32-47 (LTKK…RPKK). The disordered stretch occupies residues 1-55 (MPKMKSKSSAAKRFKKTANGFKHRQSFTSHILTKKSTKRKRHLRPKKQVNPSDVP).

Belongs to the bacterial ribosomal protein bL35 family.

This is Large ribosomal subunit protein bL35 from Hahella chejuensis (strain KCTC 2396).